The sequence spans 257 residues: MSINDKPIGFFDSGVGGISVLKEAFKLLPKEDFLYYGDSKNAPYGTKKVEEVKALTFNATDFLMSKGIKALVVACNTATSVTINDLRENYDIPIIGIEPALKPAVELKKGGKIIIMATPMTLAEKKFANLMDLYKETEDIEPLPCPGLPELIEQGIVSGDVIYNYLKDKFSKYDNEKISSIVLGCTHYPFIEETLKEVTHNKACIIDGSFGTSRELKRQLKNSNMLTEENRVGKVTIFNSREDKDIIDLSYKLFNMK.

Substrate is bound by residues 12-13 (DS) and 44-45 (YG). The Proton donor/acceptor role is filled by Cys75. 76–77 (NT) contributes to the substrate binding site. Catalysis depends on Cys185, which acts as the Proton donor/acceptor. 186–187 (TH) lines the substrate pocket.

Belongs to the aspartate/glutamate racemases family.

The catalysed reaction is L-glutamate = D-glutamate. It functions in the pathway cell wall biogenesis; peptidoglycan biosynthesis. Functionally, provides the (R)-glutamate required for cell wall biosynthesis. The sequence is that of Glutamate racemase from Clostridium botulinum (strain ATCC 19397 / Type A).